Reading from the N-terminus, the 199-residue chain is dITP/XTP pyrophosphatase (199 aa).

7–12 (TGNAGK) lines the substrate pocket. Glutamate 37 and aspartate 66 together coordinate Mg(2+). The Proton acceptor role is filled by aspartate 66. Substrate is bound by residues serine 67, 146–149 (FGYD), lysine 169, and 174–175 (HR).

Belongs to the HAM1 NTPase family. Homodimer. It depends on Mg(2+) as a cofactor.

It catalyses the reaction XTP + H2O = XMP + diphosphate + H(+). The enzyme catalyses dITP + H2O = dIMP + diphosphate + H(+). It carries out the reaction ITP + H2O = IMP + diphosphate + H(+). Pyrophosphatase that catalyzes the hydrolysis of nucleoside triphosphates to their monophosphate derivatives, with a high preference for the non-canonical purine nucleotides XTP (xanthosine triphosphate), dITP (deoxyinosine triphosphate) and ITP. Seems to function as a house-cleaning enzyme that removes non-canonical purine nucleotides from the nucleotide pool, thus preventing their incorporation into DNA/RNA and avoiding chromosomal lesions. The sequence is that of dITP/XTP pyrophosphatase from Deinococcus geothermalis (strain DSM 11300 / CIP 105573 / AG-3a).